The chain runs to 45 residues: Parabutoporin (45 aa).

As to quaternary structure, monomer and homodimer. As to expression, expressed by the venom gland.

The protein localises to the secreted. The protein resides in the target cell membrane. Its function is as follows. At high concentrations, acts as a pore former in cellular membranes and causes the leakage of the cells. At submicromolar concentrations, degranulates granulocytes and has a weak hemolytic activity against human red blood cells. Also strongly inhibits the production of superoxide anions. Has a strong antibacterial activity against Gram-negative bacteria but is less active against Gram-positive bacteria. Also has antifungal activity. Induces reversible G-protein dependent Ca(2+) release from intracellular stores and increase Ca(2+) influx in HL-60 cells. Induces the activation of the Rac pathway in granulocytes. Synergistically enhances the excitatory effects of short and long chain ion-channel-specific neurotoxins by interaction with the neuronal membranes. This Parabuthus schlechteri (Scorpion) protein is Parabutoporin.